Reading from the N-terminus, the 154-residue chain is Toxin YhaV (154 aa).

Homohexamer; forms a complex with PrlF (SohA) with stoichiometry PrlF(2)-YhaV(4), possibly as a YhaV(2)-PrlF(2)-YhaV(2) complex like the MazFE complex. May dimerize in solution.

Toxic component of a type II toxin-antitoxin (TA) system. Has RNase activity in vitro. Acts as a transcription factor. The YhaV/PrlF complex binds the prlF-yhaV operon, probably negatively regulating its expression. In Escherichia coli O6:H1 (strain CFT073 / ATCC 700928 / UPEC), this protein is Toxin YhaV (yhaV).